The primary structure comprises 159 residues: Large ribosomal subunit protein mL50 (159 aa).

Belongs to the mitochondrion-specific ribosomal protein mL50 family. In terms of assembly, component of the mitochondrial ribosome large subunit (39S) which comprises a 16S rRNA and about 50 distinct proteins.

The protein resides in the mitochondrion. This Bos taurus (Bovine) protein is Large ribosomal subunit protein mL50 (MRPL50).